The following is a 643-amino-acid chain: uncharacterized protein (643 aa).

The disordered stretch occupies residues 561 to 643 (LNQELETSSE…GADRKKRGVY (83 aa)). Gly residues predominate over residues 591 to 606 (SRGGRGGRGARGGNRG). Residues 617–635 (GHDRQMKEKHKSDIKQRGA) show a composition bias toward basic and acidic residues.

This is an uncharacterized protein from Caenorhabditis elegans.